Reading from the N-terminus, the 630-residue chain is DNA mismatch repair protein MutL (630 aa).

2 disordered regions span residues 361–386 and 407–431; these read VLSS…APAE and FERK…GQAE. A compositionally biased stretch (basic and acidic residues) spans 407 to 421; the sequence is FERKQEEEVGEERCS.

The protein belongs to the DNA mismatch repair MutL/HexB family.

Its function is as follows. This protein is involved in the repair of mismatches in DNA. It is required for dam-dependent methyl-directed DNA mismatch repair. May act as a 'molecular matchmaker', a protein that promotes the formation of a stable complex between two or more DNA-binding proteins in an ATP-dependent manner without itself being part of a final effector complex. This is DNA mismatch repair protein MutL from Geobacillus kaustophilus (strain HTA426).